The sequence spans 338 residues: Ketol-acid reductoisomerase (NADP(+)) (338 aa).

Residues 1–181 (MKVFYDKDCD…GGGKAGIIET (181 aa)) enclose the KARI N-terminal Rossmann domain. NADP(+) contacts are provided by residues 24-27 (YGSQ), Arg-47, and Ser-52. His-107 is an active-site residue. Gly-133 serves as a coordination point for NADP(+). The KARI C-terminal knotted domain maps to 182–327 (NFREETETDL…EKLRAMMPWI (146 aa)). 4 residues coordinate Mg(2+): Asp-190, Glu-194, Glu-226, and Glu-230. Ser-251 lines the substrate pocket.

The protein belongs to the ketol-acid reductoisomerase family. Mg(2+) serves as cofactor.

It carries out the reaction (2R)-2,3-dihydroxy-3-methylbutanoate + NADP(+) = (2S)-2-acetolactate + NADPH + H(+). The catalysed reaction is (2R,3R)-2,3-dihydroxy-3-methylpentanoate + NADP(+) = (S)-2-ethyl-2-hydroxy-3-oxobutanoate + NADPH + H(+). It participates in amino-acid biosynthesis; L-isoleucine biosynthesis; L-isoleucine from 2-oxobutanoate: step 2/4. Its pathway is amino-acid biosynthesis; L-valine biosynthesis; L-valine from pyruvate: step 2/4. Its function is as follows. Involved in the biosynthesis of branched-chain amino acids (BCAA). Catalyzes an alkyl-migration followed by a ketol-acid reduction of (S)-2-acetolactate (S2AL) to yield (R)-2,3-dihydroxy-isovalerate. In the isomerase reaction, S2AL is rearranged via a Mg-dependent methyl migration to produce 3-hydroxy-3-methyl-2-ketobutyrate (HMKB). In the reductase reaction, this 2-ketoacid undergoes a metal-dependent reduction by NADPH to yield (R)-2,3-dihydroxy-isovalerate. This Polaromonas sp. (strain JS666 / ATCC BAA-500) protein is Ketol-acid reductoisomerase (NADP(+)).